A 512-amino-acid chain; its full sequence is ATP synthase subunit alpha (512 aa).

Residue 170–177 coordinates ATP; it reads GDRQTGKT.

The protein belongs to the ATPase alpha/beta chains family. In terms of assembly, F-type ATPases have 2 components, CF(1) - the catalytic core - and CF(0) - the membrane proton channel. CF(1) has five subunits: alpha(3), beta(3), gamma(1), delta(1), epsilon(1). CF(0) has three main subunits: a(1), b(2) and c(9-12). The alpha and beta chains form an alternating ring which encloses part of the gamma chain. CF(1) is attached to CF(0) by a central stalk formed by the gamma and epsilon chains, while a peripheral stalk is formed by the delta and b chains.

The protein localises to the cell inner membrane. It catalyses the reaction ATP + H2O + 4 H(+)(in) = ADP + phosphate + 5 H(+)(out). Functionally, produces ATP from ADP in the presence of a proton gradient across the membrane. The alpha chain is a regulatory subunit. The polypeptide is ATP synthase subunit alpha (Solibacter usitatus (strain Ellin6076)).